A 225-amino-acid chain; its full sequence is Uracil-DNA glycosylase (225 aa).

Residue D65 is the Proton acceptor of the active site.

This sequence belongs to the uracil-DNA glycosylase (UDG) superfamily. UNG family.

It localises to the cytoplasm. The enzyme catalyses Hydrolyzes single-stranded DNA or mismatched double-stranded DNA and polynucleotides, releasing free uracil.. In terms of biological role, excises uracil residues from the DNA which can arise as a result of misincorporation of dUMP residues by DNA polymerase or due to deamination of cytosine. This is Uracil-DNA glycosylase from Alkaliphilus oremlandii (strain OhILAs) (Clostridium oremlandii (strain OhILAs)).